A 430-amino-acid chain; its full sequence is Adenylosuccinate synthetase (430 aa).

GTP contacts are provided by residues 13-19 (GDEGKGK) and 41-43 (GHT). The active-site Proton acceptor is the aspartate 14. Positions 14 and 41 each coordinate Mg(2+). Residues 14–17 (DEGK), 39–42 (NAGH), threonine 130, arginine 144, glutamine 225, threonine 240, and arginine 304 contribute to the IMP site. Residue histidine 42 is the Proton donor of the active site. Residue 300–306 (ASTGRPR) coordinates substrate. GTP contacts are provided by residues arginine 306, 332-334 (KLD), and 414-416 (STG).

Belongs to the adenylosuccinate synthetase family. In terms of assembly, homodimer. Requires Mg(2+) as cofactor.

The protein localises to the cytoplasm. The catalysed reaction is IMP + L-aspartate + GTP = N(6)-(1,2-dicarboxyethyl)-AMP + GDP + phosphate + 2 H(+). The protein operates within purine metabolism; AMP biosynthesis via de novo pathway; AMP from IMP: step 1/2. Its function is as follows. Plays an important role in the de novo pathway of purine nucleotide biosynthesis. Catalyzes the first committed step in the biosynthesis of AMP from IMP. The polypeptide is Adenylosuccinate synthetase (Xanthomonas oryzae pv. oryzae (strain PXO99A)).